Consider the following 594-residue polypeptide: Apolipoprotein N-acyltransferase (594 aa).

The span at 1–29 (MIPAVTDDDPLEDPLDDDVAPGLDDAEPE) shows a compositional bias: acidic residues. Residues 1–48 (MIPAVTDDDPLEDPLDDDVAPGLDDAEPEPEPRDEHDEPSRPATGSRI) form a disordered region. Over 1 to 67 (MIPAVTDDDP…RFGKGVLDRC (67 aa)) the chain is Cytoplasmic. Residues 30–40 (PEPRDEHDEPS) are compositionally biased toward basic and acidic residues. The chain crosses the membrane as a helical span at residues 68–87 (APLSAAIGGGLALWLSFPPI). Residues 88 to 116 (GWWFTAFPGLALLGWVLTRTATTKAGGFG) are Extracellular-facing. Residues 117–134 (YGVLFGLAFYVPLLPWIS) traverse the membrane as a helical segment. Topologically, residues 135–138 (GLVG) are cytoplasmic. Residues 139–160 (AVPWLALAFAESLFCGLFGLGA) traverse the membrane as a helical segment. Topologically, residues 161–221 (VVVVRLPGWP…IGGAPLVSFA (61 aa)) are extracellular. A helical transmembrane segment spans residues 222-239 (VALIGFSLTLLTAQIVWW). At 240-251 (WRHGHKPGVPAP) the chain is on the cytoplasmic side. A helical transmembrane segment spans residues 252 to 269 (AVMLPGVAIAASLLVTAL). Over 270 to 554 (VWPQVRQSGT…TDLTPATKWG (285 aa)) the chain is Extracellular. Residues 287 to 543 (VTVAAVQGNV…PAYLDNQIRL (257 aa)) form the CN hydrolase domain. The active-site Proton acceptor is the glutamate 340. Lysine 405 is an active-site residue. The active-site Nucleophile is the cysteine 455. The helical transmembrane segment at 555–572 (PIVQAVLVIAGVAVLLIA) threads the bilayer. The Cytoplasmic segment spans residues 573 to 594 (ILHNGRFAPRMLRRRSATTVKR).

Belongs to the CN hydrolase family. Apolipoprotein N-acyltransferase subfamily. In terms of assembly, interacts with Ppm1 (AC A0QZ12) upon coexpression in E.coli, which increases the PPM synthase activity of Ppm1.

The protein localises to the cell membrane. The catalysed reaction is N-terminal S-1,2-diacyl-sn-glyceryl-L-cysteinyl-[lipoprotein] + a glycerophospholipid = N-acyl-S-1,2-diacyl-sn-glyceryl-L-cysteinyl-[lipoprotein] + a 2-acyl-sn-glycero-3-phospholipid + H(+). It functions in the pathway protein modification; lipoprotein biosynthesis (N-acyl transfer). Its function is as follows. Catalyzes the phospholipid dependent N-acylation of the N-terminal cysteine of apolipoprotein, the last step in lipoprotein maturation. Can transfer a number of fatty acids (C16 and C19, palmitic and probably tuberculostearic acids respectively are shown). Enhances the polyprenol monophosphomannose (PPM) synthase activity of Ppm1 (AC A0QZ12) without itself having PPM synthase catalytic activity. The sequence is that of Apolipoprotein N-acyltransferase from Mycolicibacterium smegmatis (strain ATCC 700084 / mc(2)155) (Mycobacterium smegmatis).